Here is a 163-residue protein sequence, read N- to C-terminus: Arginine repressor (163 aa).

Belongs to the ArgR family.

The protein resides in the cytoplasm. It functions in the pathway amino-acid biosynthesis; L-arginine biosynthesis [regulation]. Functionally, regulates arginine biosynthesis genes. This is Arginine repressor from Corynebacterium diphtheriae (strain ATCC 700971 / NCTC 13129 / Biotype gravis).